An 82-amino-acid polypeptide reads, in one-letter code: RNA-binding protein Hfq (82 aa).

A Sm domain is found at 11–71 (DTFLNHVRKT…ISTIMPGAPI (61 aa)).

It belongs to the Hfq family. As to quaternary structure, homohexamer.

Functionally, RNA chaperone that binds small regulatory RNA (sRNAs) and mRNAs to facilitate mRNA translational regulation in response to envelope stress, environmental stress and changes in metabolite concentrations. Also binds with high specificity to tRNAs. In Bradyrhizobium diazoefficiens (strain JCM 10833 / BCRC 13528 / IAM 13628 / NBRC 14792 / USDA 110), this protein is RNA-binding protein Hfq.